Consider the following 261-residue polypeptide: Zinc import ATP-binding protein ZnuC (261 aa).

Residues isoleucine 6–asparagine 221 enclose the ABC transporter domain. Glycine 38–threonine 45 provides a ligand contact to ATP.

This sequence belongs to the ABC transporter superfamily. Zinc importer (TC 3.A.1.15.5) family. In terms of assembly, the complex is composed of two ATP-binding proteins (ZnuC), two transmembrane proteins (ZnuB) and a solute-binding protein (ZnuA).

The protein localises to the cell inner membrane. The enzyme catalyses Zn(2+)(out) + ATP(in) + H2O(in) = Zn(2+)(in) + ADP(in) + phosphate(in) + H(+)(in). In terms of biological role, part of the ABC transporter complex ZnuABC involved in zinc import. Responsible for energy coupling to the transport system. This chain is Zinc import ATP-binding protein ZnuC, found in Pseudomonas fluorescens (strain Pf0-1).